Here is a 95-residue protein sequence, read N- to C-terminus: MNIIKVKVVYALPDIQYIKEVHIDSNSTVKDAILASNLLNTVKNIQFYKNNVGIYNKLVHLNENVKNGDRIEIYRNLIIDPKERRRKRSNICLKK.

This sequence belongs to the UPF0125 (RnfH) family.

In Buchnera aphidicola subsp. Schizaphis graminum (strain Sg), this protein is UPF0125 protein BUsg_244.